The primary structure comprises 364 residues: 3-isopropylmalate dehydrogenase (364 aa).

Glycine 78–glutamate 89 lines the NAD(+) pocket. Substrate-binding residues include arginine 96, arginine 106, arginine 135, and aspartate 224. Residues aspartate 224, aspartate 249, and aspartate 253 each contribute to the Mg(2+) site. Glycine 288–asparagine 299 serves as a coordination point for NAD(+).

The protein belongs to the isocitrate and isopropylmalate dehydrogenases family. Homodimer. Requires Mg(2+) as cofactor. Mn(2+) serves as cofactor.

It is found in the cytoplasm. The catalysed reaction is (2R,3S)-3-isopropylmalate + NAD(+) = 4-methyl-2-oxopentanoate + CO2 + NADH. It functions in the pathway amino-acid biosynthesis; L-leucine biosynthesis; L-leucine from 3-methyl-2-oxobutanoate: step 3/4. Its function is as follows. Catalyzes the oxidation of 3-carboxy-2-hydroxy-4-methylpentanoate (3-isopropylmalate) to 3-carboxy-4-methyl-2-oxopentanoate. The product decarboxylates to 4-methyl-2 oxopentanoate. The protein is 3-isopropylmalate dehydrogenase (LEU2) of Wickerhamomyces anomalus (strain ATCC 8168 / CBS 5759 / DSM 6766 / JCM 3585 / IAM 12210 / NCYC 432 / NBRC 10213 / NRRL Y-366 / AJ 5027) (Yeast).